The primary structure comprises 266 residues: Signal peptidase I (266 aa).

Over 1-20 the chain is Cytoplasmic; sequence MQTDNTKSNTNKTAKQEWGS. A helical membrane pass occupies residues 21–41; sequence FAFVICIALLIRILIMEPFNV. Residues 42–266 are Extracellular-facing; the sequence is PTGSMKATIL…IFRNLYNTDA (225 aa). Active-site residues include serine 45 and lysine 108.

The protein belongs to the peptidase S26 family.

Its subcellular location is the cell membrane. The catalysed reaction is Cleavage of hydrophobic, N-terminal signal or leader sequences from secreted and periplasmic proteins.. This is Signal peptidase I (lepB) from Rickettsia conorii (strain ATCC VR-613 / Malish 7).